The following is a 659-amino-acid chain: Protein real-time (659 aa).

The PRELI/MSF1 domain maps to 3–175; the sequence is QKFQSPVRVY…FIGQLREEGI (173 aa). Positions 286 to 462 constitute a CRAL-TRIO domain; that stretch reads KPAVVVEHFP…FLGGPCKTMI (177 aa). Ser477 carries the post-translational modification Phosphoserine. A GOLD domain is found at 512-631; it reads HRNLYKSVDL…QLNVFYEVLS (120 aa).

As to expression, restricted to the developing gut and central nervous system (CNS).

It is found in the mitochondrion. The sequence is that of Protein real-time (retm) from Drosophila melanogaster (Fruit fly).